The following is a 175-amino-acid chain: Ribosome maturation factor RimM (175 aa).

The PRC barrel domain occupies 96–175; that stretch reads EDEFYWRELF…RIEVDWDPGF (80 aa).

It belongs to the RimM family. Binds ribosomal protein uS19.

The protein localises to the cytoplasm. Functionally, an accessory protein needed during the final step in the assembly of 30S ribosomal subunit, possibly for assembly of the head region. Essential for efficient processing of 16S rRNA. May be needed both before and after RbfA during the maturation of 16S rRNA. It has affinity for free ribosomal 30S subunits but not for 70S ribosomes. The chain is Ribosome maturation factor RimM from Aliivibrio fischeri (strain ATCC 700601 / ES114) (Vibrio fischeri).